The chain runs to 421 residues: UDP-N-acetylglucosamine 1-carboxyvinyltransferase (421 aa).

22-23 (KN) is a phosphoenolpyruvate binding site. Arg-94 contacts UDP-N-acetyl-alpha-D-glucosamine. Residue Cys-118 is the Proton donor of the active site. Cys-118 bears the 2-(S-cysteinyl)pyruvic acid O-phosphothioketal mark. Residues 163–166 (KVSV), Asp-308, and Ile-330 each bind UDP-N-acetyl-alpha-D-glucosamine.

It belongs to the EPSP synthase family. MurA subfamily.

Its subcellular location is the cytoplasm. The enzyme catalyses phosphoenolpyruvate + UDP-N-acetyl-alpha-D-glucosamine = UDP-N-acetyl-3-O-(1-carboxyvinyl)-alpha-D-glucosamine + phosphate. The protein operates within cell wall biogenesis; peptidoglycan biosynthesis. In terms of biological role, cell wall formation. Adds enolpyruvyl to UDP-N-acetylglucosamine. The chain is UDP-N-acetylglucosamine 1-carboxyvinyltransferase from Orientia tsutsugamushi (strain Boryong) (Rickettsia tsutsugamushi).